Here is a 156-residue protein sequence, read N- to C-terminus: Putative HTH-type transcriptional regulator BadM (156 aa).

The region spanning arginine 4–lysine 130 is the HTH rrf2-type domain. The disordered stretch occupies residues arginine 136 to alanine 156. The span at glycine 145–alanine 156 shows a compositional bias: low complexity.

The chain is Putative HTH-type transcriptional regulator BadM (badM) from Rhodopseudomonas palustris (strain ATCC BAA-98 / CGA009).